A 517-amino-acid chain; its full sequence is Ribonuclease Y (517 aa).

The chain crosses the membrane as a helical span at residues 1 to 21; the sequence is MIESLIALIAAIVGLGIGYLV. Positions 207 to 273 constitute a KH domain; that stretch reads LINVINIKND…TKVIELLVED (67 aa). An HD domain is found at 333 to 426; the sequence is ALAHSLEVAH…VCAADTLSAA (94 aa).

Belongs to the RNase Y family.

It is found in the cell membrane. Endoribonuclease that initiates mRNA decay. This is Ribonuclease Y from Campylobacter jejuni subsp. jejuni serotype O:23/36 (strain 81-176).